Reading from the N-terminus, the 466-residue chain is MSTRSVSSSSYRRMFGGPGTGSRPSSTRSYVTTSTRTYSLGSALRPSTSRSLYASSPGGAYATRSSAVRLRSSVPGVRLLQDSVDFSLADAINTEFKNTRTNEKVELQELNDRFANYIDKVRFLEQQNKILLAELEQLKGQGKSRLGDLYEEEMRELRRQVDQLTNDKARVEVERDNLAEDIMRLREKLQEEMLQREEAESTLQSFRQDVDNASLARLDLERKVESLQEEIAFLKKLHDEEIQELQAQIQDQHVQIDMDVSKPDLTAALRDVRQQYESVAAKNLQEAEEWYKSKFADLSEAANRNNDALRQAKQESNEYRRQVQSLTCEVDALKGTNESLERQMREMEENFAVEAANYQDTIGRLQDEIQNMKEEMARHLREYQDLLNVKMALDIEIATYRKLLEGEESRIALPLPNFSSLNLRETNLDSLPLVDTHSKRTLLIKTVETRDGQVINETSQHHDDLE.

Over residues 1–13 the composition is skewed to low complexity; the sequence is MSTRSVSSSSYRR. The disordered stretch occupies residues 1–32; it reads MSTRSVSSSSYRRMFGGPGTGSRPSSTRSYVT. S2 carries the post-translational modification N-acetylserine. Residues 2–95 form a head region; the sequence is STRSVSSSSY…FSLADAINTE (94 aa). S5, S7, S8, S9, and S10 each carry phosphoserine. S7 carries an O-linked (GlcNAc) serine; alternate glycan. Phosphothreonine is present on T20. Low complexity predominate over residues 21 to 32; that stretch reads GSRPSSTRSYVT. Residues S25 and S26 each carry the phosphoserine modification. Residue T33 is glycosylated (O-linked (GlcNAc) threonine). Residues S34, S39, S42, S47, S49, and S51 each carry the phosphoserine modification. O-linked (GlcNAc) serine; alternate glycosylation is present at S34. Y53 is subject to Phosphotyrosine. A phosphoserine mark is found at S55 and S56. The residue at position 61 (Y61) is a Phosphotyrosine. A phosphoserine mark is found at S66, S72, S73, S83, and S87. The coil 1A stretch occupies residues 96–131; the sequence is FKNTRTNEKVELQELNDRFANYIDKVRFLEQQNKIL. The stretch at 96 to 131 forms a coiled coil; the sequence is FKNTRTNEKVELQELNDRFANYIDKVRFLEQQNKIL. The IF rod domain maps to 103–411; it reads EKVELQELND…KLLEGEESRI (309 aa). A Glycyl lysine isopeptide (Lys-Gly) (interchain with G-Cter in SUMO2) cross-link involves residue K104. A Phosphotyrosine modification is found at Y117. An N6-acetyllysine; alternate mark is found at K120, K129, and K139. 2 positions are modified to N6-succinyllysine; alternate: K120 and K129. Glycyl lysine isopeptide (Lys-Gly) (interchain with G-Cter in SUMO2); alternate cross-links involve residues K120, K129, and K139. The segment at 132 to 153 is linker 1; it reads LAELEQLKGQGKSRLGDLYEEE. Position 144 is a phosphoserine (S144). A coiled-coil region spans residues 154–245; it reads MRELRRQVDQ…KLHDEEIQEL (92 aa). Residues 154 to 245 form a coil 1B region; sequence MRELRRQVDQ…KLHDEEIQEL (92 aa). K168 carries the N6-acetyllysine modification. Position 188 is an N6-acetyllysine; alternate (K188). K188 is subject to N6-succinyllysine; alternate. The residue at position 214 (S214) is a Phosphoserine. At K223 the chain carries N6-acetyllysine; alternate. K223 is covalently cross-linked (Glycyl lysine isopeptide (Lys-Gly) (interchain with G-Cter in SUMO2); alternate). S226 carries the post-translational modification Phosphoserine. N6-acetyllysine is present on K235. Residues 246 to 268 form a linker 12 region; it reads QAQIQDQHVQIDMDVSKPDLTAA. K262 participates in a covalent cross-link: Glycyl lysine isopeptide (Lys-Gly) (interchain with G-Cter in SUMO2). The segment at 269-407 is coil 2; sequence LRDVRQQYES…ATYRKLLEGE (139 aa). At K294 the chain carries N6-acetyllysine; alternate. Residue K294 is modified to N6-succinyllysine; alternate. Residue K294 forms a Glycyl lysine isopeptide (Lys-Gly) (interchain with G-Cter in SUMO2); alternate linkage. Phosphoserine is present on S299. Positions 303-407 form a coiled coil; sequence NRNNDALRQA…ATYRKLLEGE (105 aa). A Glycyl lysine isopeptide (Lys-Gly) (interchain with G-Cter in SUMO2) cross-link involves residue K313. At S325 the chain carries Phosphoserine. The [IL]-x-C-x-x-[DE] motif motif lies at 326–329; the sequence is LTCE. Position 373 is an N6-acetyllysine; alternate (K373). Residue K373 forms a Glycyl lysine isopeptide (Lys-Gly) (interchain with G-Cter in SUMO2); alternate linkage. Residues 408 to 466 are tail; the sequence is ESRIALPLPNFSSLNLRETNLDSLPLVDTHSKRTLLIKTVETRDGQVINETSQHHDDLE. Phosphoserine is present on residues S409, S419, and S420. Residue T426 is modified to Phosphothreonine. S430 is subject to Phosphoserine. Phosphothreonine is present on T436. A Phosphoserine modification is found at S438. A Glycyl lysine isopeptide (Lys-Gly) (interchain with G-Cter in SUMO2) cross-link involves residue K439. At K445 the chain carries N6-acetyllysine; alternate. Position 445 is an N6-succinyllysine; alternate (K445). Residue K445 forms a Glycyl lysine isopeptide (Lys-Gly) (interchain with G-Cter in SUMO2); alternate linkage. Residue K445 forms a Glycyl lysine isopeptide (Lys-Gly) (interchain with G-Cter in SUMO1); alternate linkage. T446 and T458 each carry phosphothreonine. S459 carries the phosphoserine modification.

Belongs to the intermediate filament family. Homomer assembled from elementary dimers. Identified in complexes that contain VIM, EZR, AHNAK, BFSP1, BFSP2, ANK2, PLEC, PRX and spectrin. Interacts with BCAS3. Interacts with LGSN. Interacts with SYNM. Interacts (via rod region) with PLEC (via CH 1 domain). Interacts with STK33. Interacts with LARP6. Interacts with RAB8B. Interacts with TOR1A; the interaction associates TOR1A with the cytoskeleton. Interacts with TOR1AIP1. Interacts with TOR1AIP1. Interacts with DIAPH1. Interacts with EPPK1; interaction is dependent of higher-order structure of intermediate filament. Interacts with the non-receptor tyrosine kinase SRMS; the interaction leads to phosphorylation of VIM. Interacts with NOD2. Interacts (via head region) with CORO1C. Interacts with HDGF. Interacts with PRKCE (via phorbol-ester/DAG-type 2 domain). Interacts with BFSP2. Interacts with PPL. Interacts with PKP1 and PKP2. Interacts with SCRIB (via PDZ domains); the interaction protects SCRIB from proteasomal degradation and facilitates SCRIB localization to intermediate filaments, the interaction is reduced by cell contact inhibition. In terms of processing, filament disassembly during mitosis is promoted by phosphorylation at Ser-55 as well as by nestin. One of the most prominent phosphoproteins in various cells of mesenchymal origin. Phosphorylation is enhanced during cell division, at which time vimentin filaments are significantly reorganized. Phosphorylation by PKN1 inhibits the formation of filaments. Phosphorylated at Ser-56 by CDK5 during neutrophil secretion in the cytoplasm. Phosphorylated by STK33. Phosphorylated on tyrosine residues by SRMS. O-glycosylated during cytokinesis at sites identical or close to phosphorylation sites, this interferes with the phosphorylation status. Post-translationally, S-nitrosylation is induced by interferon-gamma and oxidatively-modified low-densitity lipoprotein (LDL(ox)) possibly implicating the iNOS-S100A8/9 transnitrosylase complex.

Its subcellular location is the cytoplasm. The protein localises to the cytoskeleton. The protein resides in the nucleus matrix. It is found in the cell membrane. Its function is as follows. Vimentins are class-III intermediate filaments found in various non-epithelial cells, especially mesenchymal cells. Vimentin is attached to the nucleus, endoplasmic reticulum, and mitochondria, either laterally or terminally. Plays a role in cell directional movement, orientation, cell sheet organization and Golgi complex polarization at the cell migration front. Protects SCRIB from proteasomal degradation and facilitates its localization to intermediate filaments in a cell contact-mediated manner. In terms of biological role, involved with LARP6 in the stabilization of type I collagen mRNAs for CO1A1 and CO1A2. This is Vimentin (VIM) from Canis lupus familiaris (Dog).